Here is a 399-residue protein sequence, read N- to C-terminus: Elongation factor Tu (399 aa).

A tr-type G domain is found at 10–209; that stretch reads NPHVNIGTIG…EVDSYIPTPE (200 aa). A G1 region spans residues 19–26; sequence GHVYHGKT. 19–26 serves as a coordination point for GTP; it reads GHVYHGKT. T26 provides a ligand contact to Mg(2+). The G2 stretch occupies residues 60 to 64; it reads GITIA. A G3 region spans residues 81-84; the sequence is DCPG. GTP is bound by residues 81 to 85 and 136 to 139; these read DCPGH and NKQD. Positions 136 to 139 are G4; it reads NKQD. The segment at 174–176 is G5; that stretch reads SAL.

It belongs to the TRAFAC class translation factor GTPase superfamily. Classic translation factor GTPase family. EF-Tu/EF-1A subfamily. As to quaternary structure, monomer.

It localises to the cytoplasm. The enzyme catalyses GTP + H2O = GDP + phosphate + H(+). Its function is as follows. GTP hydrolase that promotes the GTP-dependent binding of aminoacyl-tRNA to the A-site of ribosomes during protein biosynthesis. In Helicobacter pylori (strain J99 / ATCC 700824) (Campylobacter pylori J99), this protein is Elongation factor Tu.